The sequence spans 207 residues: BTB/POZ domain-containing protein At1g01640 (207 aa).

The 71-residue stretch at 24-94 (TDVLVKPGEE…LYSGNLKAPY (71 aa)) folds into the BTB domain.

Interacts with CUL3A.

Its pathway is protein modification; protein ubiquitination. In terms of biological role, may act as a substrate-specific adapter of an E3 ubiquitin-protein ligase complex (CUL3-RBX1-BTB) which mediates the ubiquitination and subsequent proteasomal degradation of target proteins. This is BTB/POZ domain-containing protein At1g01640 from Arabidopsis thaliana (Mouse-ear cress).